Here is a 95-residue protein sequence, read N- to C-terminus: GSGPTYCWNEANNPGGPNRCSNNKQCDGARTCSSSGFCQGTSRKPDPGPKGPTYCWDEAKNPGGPNRCSNSKQCDGARTCSSSGFCQGTAGHAAA.

The interval 3–41 (GPTYCWNEANNPGGPNRCSNNKQCDGARTCSSSGFCQGT) is SD1. Cystine bridges form between cysteine 7-cysteine 55, cysteine 20-cysteine 32, cysteine 26-cysteine 38, cysteine 68-cysteine 80, and cysteine 74-cysteine 86. Residues 51–89 (GPTYCWDEAKNPGGPNRCSNSKQCDGARTCSSSGFCQGT) are SD2.

Functionally, has strong anti-HIV activity against T-tropic strains of HIV-1 and weaker activity against M-tropic strains of HIV-1. Inhibits HIV-1 fusion and infection of CD4 LTR beta-gal cells in vitro. Inhibits fusion of HIV infected CEM-SS cells with uninfected CEM-SS cells, and fusion of HIV-1 Env expressing HL2/3 cells with CD4 LTR beta-gal cells. Binds to HIV gp120, HIV gp160 and to a lesser extent HIV gp41. Binding to HIV gp120 is glycosylation dependent. Binds with high specificity to the tetrasaccharide Man-alpha-1,2-Man-alpha-1,6-Man-alpha-1,6-Man and also binds the higher-order oligosaccharides oligomannose 8 and oligomannose 9. Does not bind to monosaccharides, complex or hybrid N-linked oligosaccharides or chitin. The protein is Scytovirin of Scytonema varium.